The chain runs to 21 residues: DKNKKPIRVGGRRPPGFTPFR.

Over residues 1-11 (DKNKKPIRVGG) the composition is skewed to basic residues. The segment at 1 to 21 (DKNKKPIRVGGRRPPGFTPFR) is disordered.

Belongs to the bradykinin-related peptide family. Expressed by the venom gland.

The protein resides in the secreted. Causes constriction of the isolated rat ileum muscles (is 13-fold less potent than bradykinin (BK)), as well as degranulation of mast cells (is 7-fold more potent than BK). In vivo, causes algesic effects. Muscle constriction and algesic effects are partially mediated by bradykinin receptors B2 (BDKRB2). This chain is Protopolybiakinin-1, found in Protopolybia exigua (Neotropical social wasp).